The chain runs to 65 residues: Cecropin (65 aa).

Residues 1 to 23 (MNFVKVLFFISACILIMLSAVSG) form the signal peptide.

The protein belongs to the cecropin family.

The protein resides in the secreted. Functionally, has antibacterial activity. The protein is Cecropin (LOC113514368) of Galleria mellonella (Greater wax moth).